The primary structure comprises 224 residues: UPF0441 protein ECA0329 (224 aa).

A disordered region spans residues 180 to 224 (TALAPKPATTSTITRGGFGETVAKQNSMQRSSASSNSSSSRSMGG). Low complexity predominate over residues 204–224 (QNSMQRSSASSNSSSSRSMGG).

This sequence belongs to the UPF0441 family.

The chain is UPF0441 protein ECA0329 from Pectobacterium atrosepticum (strain SCRI 1043 / ATCC BAA-672) (Erwinia carotovora subsp. atroseptica).